The chain runs to 235 residues: Ubiquinone/menaquinone biosynthesis C-methyltransferase UbiE (235 aa).

2 residues coordinate S-adenosyl-L-methionine: threonine 60 and aspartate 81.

The protein belongs to the class I-like SAM-binding methyltransferase superfamily. MenG/UbiE family.

The enzyme catalyses a 2-demethylmenaquinol + S-adenosyl-L-methionine = a menaquinol + S-adenosyl-L-homocysteine + H(+). The catalysed reaction is a 2-methoxy-6-(all-trans-polyprenyl)benzene-1,4-diol + S-adenosyl-L-methionine = a 5-methoxy-2-methyl-3-(all-trans-polyprenyl)benzene-1,4-diol + S-adenosyl-L-homocysteine + H(+). Its pathway is quinol/quinone metabolism; menaquinone biosynthesis; menaquinol from 1,4-dihydroxy-2-naphthoate: step 2/2. It participates in cofactor biosynthesis; ubiquinone biosynthesis. Functionally, methyltransferase required for the conversion of demethylmenaquinol (DMKH2) to menaquinol (MKH2) and the conversion of 2-polyprenyl-6-methoxy-1,4-benzoquinol (DDMQH2) to 2-polyprenyl-3-methyl-6-methoxy-1,4-benzoquinol (DMQH2). In Geotalea uraniireducens (strain Rf4) (Geobacter uraniireducens), this protein is Ubiquinone/menaquinone biosynthesis C-methyltransferase UbiE.